A 437-amino-acid polypeptide reads, in one-letter code: Mannan endo-1,4-beta-mannosidase A (437 aa).

The signal sequence occupies residues 1–19; that stretch reads MMMLSKSLLSAATAASALA. Residues 20–27 constitute a propeptide that is removed on maturation; it reads AVLQPVPR. Residues 28–376 form a catalytic region; the sequence is ASSFVTISGT…VDAINGGTTT (349 aa). Residues Cys-53 and Cys-56 are joined by a disulfide bond. Residues Asn-157 and Asn-184 are each glycosylated (N-linked (GlcNAc...) asparagine). The Proton donor/acceptor role is filled by Glu-196. 196–198 serves as a coordination point for substrate; it reads EPR. Cysteines 199 and 202 form a disulfide. Glu-232 and Trp-274 together coordinate substrate. N-linked (GlcNAc...) asparagine glycosylation occurs at Asn-277. Cys-292 and Cys-299 are joined by a disulfide. The active-site Nucleophile is the Glu-303. A disulfide bridge links Cys-311 with Cys-361. N-linked (GlcNAc...) asparagine glycosylation is present at Asn-355. The disordered stretch occupies residues 372 to 399; that stretch reads GGTTTPPPVSSTTTTSSRTSSTPPPPGG. Residues 377-399 form a linker region; the sequence is PPPVSSTTTTSSRTSSTPPPPGG. Residues 381-392 show a composition bias toward low complexity; sequence SSTTTTSSRTSS. The 36-residue stretch at 400 to 435 folds into the CBM1 domain; sequence SCSPLYGQCGGSGYTGPTCCAQGTCIYSNYWYSQCL.

It belongs to the glycosyl hydrolase 5 (cellulase A) family. As to quaternary structure, monomer.

Its subcellular location is the secreted. The enzyme catalyses Random hydrolysis of (1-&gt;4)-beta-D-mannosidic linkages in mannans, galactomannans and glucomannans.. Its function is as follows. Endo-1,4-mannanase that catalyzes the random hydrolysis of (1-&gt;4)-beta-D-mannosidic linkages in mannans and heteromannans. It is a crucial enzyme for depolymerization of seed galactomannans and wood galactoglucomannans. Active against locust bean gum and ivory nut mannan, releasing mainly tri- and disaccharides. Also has transglycosylation activity. Transglycosylation of two mannotrioses into a mannohexaose is the major transglycosylation route. This is Mannan endo-1,4-beta-mannosidase A from Hypocrea jecorina (strain ATCC 56765 / BCRC 32924 / NRRL 11460 / Rut C-30) (Trichoderma reesei).